We begin with the raw amino-acid sequence, 59 residues long: Large ribosomal subunit protein uL30 (59 aa).

It belongs to the universal ribosomal protein uL30 family. As to quaternary structure, part of the 50S ribosomal subunit.

This is Large ribosomal subunit protein uL30 from Pectobacterium atrosepticum (strain SCRI 1043 / ATCC BAA-672) (Erwinia carotovora subsp. atroseptica).